The primary structure comprises 48 residues: Large ribosomal subunit protein bL32 (48 aa).

Belongs to the bacterial ribosomal protein bL32 family.

The protein is Large ribosomal subunit protein bL32 of Helicobacter pylori (strain P12).